Reading from the N-terminus, the 256-residue chain is Vesicle-associated protein 1-1 (256 aa).

Methionine 1 is modified (N-acetylmethionine). Residues 1 to 232 (MSNIDLIGMS…RRESKKSQSG (232 aa)) are Cytoplasmic-facing. N-acetylserine; in Vesicle-associated protein 1-1, N-terminally processed is present on serine 2. One can recognise an MSP domain in the interval 22-142 (LLTVEPLDLQ…EETKLRVTYV (121 aa)). The segment at 142-169 (VAPPRPPSPVHEGSEEGSSPRASVSDNG) is disordered. Serine 149 is subject to Phosphoserine. The span at 157-169 (EGSSPRASVSDNG) shows a compositional bias: polar residues. Residues 187–232 (HQENTSEARALITKLTEEKQSAIQLNNRLQRELDQLRRESKKSQSG) are a coiled coil. Residues 233–253 (GIPFMYVLLVGLIGLILGYIM) traverse the membrane as a helical; Anchor for type IV membrane protein segment.

It belongs to the VAMP-associated protein (VAP) (TC 9.B.17) family. In terms of assembly, homodimer or homooligomer. Interacts with the cowpea mosaic virus (CPMV) NTP-binding protein (NTB). Interacts with NET3C.

The protein resides in the endoplasmic reticulum membrane. Its subcellular location is the protein storage vacuole membrane. Its function is as follows. Part of a membrane-cytoskeletal adapter complex that forms a bridge between the endoplasmic reticulum and the plasma membrane. Associates with microtubules. The polypeptide is Vesicle-associated protein 1-1 (PVA11) (Arabidopsis thaliana (Mouse-ear cress)).